The chain runs to 486 residues: Zinc metalloproteinase-disintegrin VMP-II (486 aa).

An N-terminal signal peptide occupies residues 1–20 (MIQVLLVTICLAVFPYQGSS). The propeptide occupies 21–190 (IILESGNVND…KASQSNLPPE (170 aa)). Position 191 is a pyrrolidone carboxylic acid (Gln-191). The region spanning 197–394 (RYIELVVVAD…HYTTCLYNEP (198 aa)) is the Peptidase M12B domain. Glu-200 and Asp-284 together coordinate Ca(2+). 3 cysteine pairs are disulfide-bonded: Cys-308–Cys-389, Cys-348–Cys-372, and Cys-350–Cys-355. His-333 lines the Zn(2+) pocket. Glu-334 is an active-site residue. Zn(2+) is bound by residues His-337 and His-343. Ca(2+)-binding residues include Cys-389 and Asn-392. In terms of domain architecture, Disintegrin spans 402-486 (PPVCGNYYTE…AECPNKGYYG (85 aa)). 7 cysteine pairs are disulfide-bonded: Cys-405–Cys-424, Cys-416–Cys-434, Cys-418–Cys-429, Cys-428–Cys-451, Cys-442–Cys-448, Cys-447–Cys-472, and Cys-460–Cys-479. The Cell attachment site motif lies at 464–466 (RGD).

This sequence belongs to the venom metalloproteinase (M12B) family. P-II subfamily. P-IIb sub-subfamily. As to quaternary structure, monomer. It depends on Zn(2+) as a cofactor. Expressed by the venom gland.

Its subcellular location is the secreted. Snake venom zinc metalloproteinase that inhibits ADP-induced platelet aggregation (probably by binding integrin alpha-IIb/beta-3 (ITGA2B/ITGB3)) and degrades fibrinogen. The sequence is that of Zinc metalloproteinase-disintegrin VMP-II from Crotalus atrox (Western diamondback rattlesnake).